The sequence spans 327 residues: Polyprenyl transferase andD (327 aa).

A run of 8 helical transmembrane segments spans residues 49–69 (LGYI…ASIA), 81–101 (ITLL…WDDI), 140–160 (FAFV…MLFF), 174–194 (PQLI…GLNL), 201–221 (IPMA…DIIY), 244–264 (CLDA…VIAG), 271–291 (APFF…LAMA), and 307–327 (CCTS…VWRS).

This sequence belongs to the UbiA prenyltransferase family. Mg(2+) is required as a cofactor.

It localises to the membrane. The protein operates within secondary metabolite biosynthesis; terpenoid biosynthesis. Functionally, polyprenyl transferase; part of the gene cluster that mediates the biosynthesis of anditomin, a fungal meroterpenoid. The first step of the pathway is the synthesis of 3,5-dimethylorsellinic acid (DMOA) by the polyketide synthase andM. DMOA is then converted to the phthalide compound 5,7-dihydroxy-4,6-dimethylphthalide (DHDMP) by the cytochrome P450 monooxygenase andK, which is further prenylated by the prenyltransferase andD to yield farnesyl-DHDMP. Further epoxidation by the FAD-dependent monooxygenase andE leads to epoxyfarnesyl-DHDMP. The next step involves the terpene cyclase andB that converts epoxyfarnesyl-DHDMP into preandiloid A through opening of the epoxide ring followed by the cyclization of the farnesyl moiety. Preandiloid A is in turn oxidized at the C-3 hydroxyl group to yield preandiloid B by the dehydrogenase andC. The dioxygenase andA is solely responsible for the dehydrogenation of preandiloid B leading to the enone preandiloid C, as well as for the intriguing structural rearrangement to generate the bicyclo[2.2.2]octane core, transforming preandiloid C into andiconin. FAD-binding monooxygenase andJ then produces andilesin D which is reduced by dehydrogenase andI to yield andilesin A. Action of acetyltransferase andG followed by a spontaneous acetate elimination leads then to andilesin B, which is in turn substrate of the short chain dehydrogenase andH to yield andilesin C. Finally, the dioxygenase andF catalyzes the transformation of andilesin C to anditomin. The sequence is that of Polyprenyl transferase andD from Emericella variicolor (Aspergillus stellatus).